The primary structure comprises 372 residues: Lectin/endochitinase 1 (372 aa).

The N-terminal stretch at 1 to 23 (MMMRFLSAVVIMSSAMAVGLVSA) is a signal peptide. Residue glutamine 24 coordinates substrate. The residue at position 24 (glutamine 24) is a Pyrrolidone carboxylic acid. Chitin-binding type-1 domains lie at 24–64 (QRCG…KCWS) and 69–111 (DHRC…RCSS). Disulfide bonds link cysteine 26-cysteine 41, cysteine 35-cysteine 47, cysteine 40-cysteine 54, and cysteine 58-cysteine 62. 42–53 (SIWGWCGDSEPY) contributes to the substrate binding site. Histidine 70 lines the Zn(2+) pocket. 4 disulfides stabilise this stretch: cysteine 72–cysteine 87, cysteine 81–cysteine 93, cysteine 86–cysteine 100, and cysteine 105–cysteine 109. Residue histidine 90 participates in Zn(2+) binding. The spacer stretch occupies residues 113 to 128 (VRGPRVALSGNSTANS). Asparagine 123 carries N-linked (GlcNAc...) asparagine glycosylation. Residues 129–372 (IGNVVVTEPL…FQRIQMRVAA (244 aa)) are chitinase.

As to quaternary structure, monomer and homodimer. Zinc favors dimerization. Active in the monomeric form but probably inactive in the dimeric form. The interaction with glycans on the mammalian TCR and MHC molecules of the T-cell and antigen-presenting cell, respectively, is inhibited by oligomers of GlcNAc. In terms of processing, proteolytically processed to yield a very small protein (8.5 kDa, 86 AA) containing only the two chitin-binding domains. Rhizomes and inflorescence with immature seeds.

It carries out the reaction Random endo-hydrolysis of N-acetyl-beta-D-glucosaminide (1-&gt;4)-beta-linkages in chitin and chitodextrins.. Its function is as follows. Functions both as a chitinase and as a N-acetyl-D-glucosamine binding lectin. Inhibits the growth of several phytopathogenic chitin-containing fungi. Also possesses insecticidal activity and superantigenic properties. This Urtica dioica (Great nettle) protein is Lectin/endochitinase 1 (UDA1).